The sequence spans 455 residues: Gamma-glutamyl phosphate reductase (455 aa).

This sequence belongs to the gamma-glutamyl phosphate reductase family.

Its subcellular location is the cytoplasm. It carries out the reaction L-glutamate 5-semialdehyde + phosphate + NADP(+) = L-glutamyl 5-phosphate + NADPH + H(+). It functions in the pathway amino-acid biosynthesis; L-proline biosynthesis; L-glutamate 5-semialdehyde from L-glutamate: step 2/2. Its function is as follows. Catalyzes the NADPH-dependent reduction of L-glutamate 5-phosphate into L-glutamate 5-semialdehyde and phosphate. The product spontaneously undergoes cyclization to form 1-pyrroline-5-carboxylate. The sequence is that of Gamma-glutamyl phosphate reductase from Synechococcus sp. (strain JA-2-3B'a(2-13)) (Cyanobacteria bacterium Yellowstone B-Prime).